A 570-amino-acid chain; its full sequence is Urease subunit alpha 1 (570 aa).

Residues 131–570 (GGIDTHVHFI…VPMAQRYFLF (440 aa)) enclose the Urease domain. Residues His-136, His-138, and Lys-219 each coordinate Ni(2+). N6-carboxylysine is present on Lys-219. His-221 serves as a coordination point for substrate. His-248 and His-274 together coordinate Ni(2+). His-322 (proton donor) is an active-site residue. Residue Asp-362 participates in Ni(2+) binding.

It belongs to the metallo-dependent hydrolases superfamily. Urease alpha subunit family. In terms of assembly, heterotrimer of UreA (gamma), UreB (beta) and UreC (alpha) subunits. Three heterotrimers associate to form the active enzyme. The cofactor is Ni cation. Carboxylation allows a single lysine to coordinate two nickel ions.

The protein localises to the cytoplasm. It catalyses the reaction urea + 2 H2O + H(+) = hydrogencarbonate + 2 NH4(+). The protein operates within nitrogen metabolism; urea degradation; CO(2) and NH(3) from urea (urease route): step 1/1. Its function is as follows. Disrupting the ure1 operon causes loss of urease activity, decreased resistance to low pH killing in vitro and decreased pathogen survival when inoculated in BALB/c mice by gavage. The protein is Urease subunit alpha 1 of Brucella suis biovar 1 (strain 1330).